The primary structure comprises 80 residues: Small pacifastin protease inhibitor (80 aa).

Positions 1-24 (MSKVLKVGLLLLLVAVAASAYAVA) are cleaved as a signal peptide. Positions 25–47 (EENGAPKENKQLPQIDDYGVTNK) are excised as a propeptide. Positions 45-80 (TNKCPANQPFKWNCNYCTCGPEGKDASCTRMACPQH) constitute a Pacifastin domain. 3 disulfides stabilise this stretch: Cys-48-Cys-63, Cys-58-Cys-77, and Cys-61-Cys-72.

It belongs to the protease inhibitor I19 family. As to expression, expressed in the venom apparatus. Low transcript levels are also detected in other tissues.

It is found in the secreted. In terms of biological role, parasitic wasp protein that may interfere with the host immune response. The recombinant protein inhibits trypsin activity and prophenoloxidase (PPO) activation, an enzyme essential for both clotting and insect innate immune responses. It does not inhibit activity of chymotrypsin and protease K, and has no effect on phenoloxidase (PO) activity. The chain is Small pacifastin protease inhibitor from Nasonia vitripennis (Parasitic wasp).